Reading from the N-terminus, the 1136-residue chain is Nuclear pore complex protein Nup133 (1136 aa).

The tract at residues 1-26 (MFSPRGTPGSGRRQAPRTGGRRSVSA) is disordered.

This sequence belongs to the nucleoporin Nup133 family. Forms part of the Nup160 subcomplex in the nuclear pore which is composed of NUP160, NUP133, NUP107 and Nup96. This complex plays a role in RNA export and in tethering Nup98 and NUP153 to the nucleus. In terms of tissue distribution, widely expressed in the embryo and in adult tissues. Higher expression is observed in the brain, testes, ovary, skin, and kidney.

Its subcellular location is the nucleus. It is found in the nuclear pore complex. The protein resides in the chromosome. The protein localises to the centromere. It localises to the kinetochore. Involved in poly(A)+ RNA transport. Involved in nephrogenesis. The sequence is that of Nuclear pore complex protein Nup133 from Danio rerio (Zebrafish).